Here is a 565-residue protein sequence, read N- to C-terminus: Arginine--tRNA ligase (565 aa).

The 'HIGH' region motif lies at 128-138 (ANPTGPLHVGH).

This sequence belongs to the class-I aminoacyl-tRNA synthetase family. In terms of assembly, monomer.

It is found in the cytoplasm. It catalyses the reaction tRNA(Arg) + L-arginine + ATP = L-arginyl-tRNA(Arg) + AMP + diphosphate. The polypeptide is Arginine--tRNA ligase (Delftia acidovorans (strain DSM 14801 / SPH-1)).